The primary structure comprises 673 residues: Probable multidrug resistance ABC transporter ATP-binding/permease protein YheH (673 aa).

5 helical membrane passes run 18-38, 146-166, 223-243, 245-265, and 347-367; these read LITA…GPFI, IKGM…SVFF, LYVT…GIFT, LFLL…IIWL, and LAFV…AGIV. The ABC transmembrane type-1 domain maps to 18–398; it reads LITAVLLLTV…IVNQFSKLEL (381 aa). Residues 430–664 form the ABC transporter domain; that stretch reads VEFRDVSFAY…EGQYYQMYEL (235 aa). 463-470 is a binding site for ATP; it reads GHTGSGKS.

It belongs to the ABC transporter superfamily. Heterodimer composed of YheH and YheI.

The protein resides in the cell membrane. Its activity is regulated as follows. Inhibited by ortho-vanadate. Involved in the transport of four structurally unrelated drugs, including doxorubicin and mitoxantrone. Transmembrane domains (TMD) form a pore in the membrane and the ATP-binding domain (NBD) is responsible for energy generation. The sequence is that of Probable multidrug resistance ABC transporter ATP-binding/permease protein YheH (yheH) from Bacillus subtilis (strain 168).